The following is a 445-amino-acid chain: Ribosomal protein uS12 methylthiotransferase RimO (445 aa).

An MTTase N-terminal domain is found at 4–119 (IKVALVSLGC…LLESIKVFLK (116 aa)). Cysteine 13, cysteine 48, cysteine 82, cysteine 156, cysteine 160, and cysteine 163 together coordinate [4Fe-4S] cluster. The Radical SAM core domain occupies 142-372 (TTPTYTAYVR…MILQQSISKD (231 aa)). The 67-residue stretch at 375–441 (KEKIGKIYEV…EYDLIGVVYN (67 aa)) folds into the TRAM domain.

This sequence belongs to the methylthiotransferase family. RimO subfamily. The cofactor is [4Fe-4S] cluster.

The protein localises to the cytoplasm. It carries out the reaction L-aspartate(89)-[ribosomal protein uS12]-hydrogen + (sulfur carrier)-SH + AH2 + 2 S-adenosyl-L-methionine = 3-methylsulfanyl-L-aspartate(89)-[ribosomal protein uS12]-hydrogen + (sulfur carrier)-H + 5'-deoxyadenosine + L-methionine + A + S-adenosyl-L-homocysteine + 2 H(+). Catalyzes the methylthiolation of an aspartic acid residue of ribosomal protein uS12. The polypeptide is Ribosomal protein uS12 methylthiotransferase RimO (Clostridium botulinum (strain Loch Maree / Type A3)).